A 170-amino-acid chain; its full sequence is Methanogen homoaconitase small subunit (170 aa).

The short motif at tyrosine 24 to threonine 27 is the YLRT element.

The protein belongs to the LeuD family. LeuD type 2 subfamily. In terms of assembly, heterotetramer of 2 HacA and 2 HacB proteins. Cannot form a complex with LeuC.

The catalysed reaction is (2R)-homocitrate = (2R,3S)-homoisocitrate. It catalyses the reaction (2R)-homocitrate = cis-homoaconitate + H2O. The enzyme catalyses (2R,3S)-homoisocitrate = cis-homoaconitate + H2O. It carries out the reaction cis-(homo)2aconitate + H2O = (2R,3S)-iso(homo)2citrate. The catalysed reaction is cis-(homo)3aconitate + H2O = (2R,3S)-iso(homo)3citrate. It catalyses the reaction (R)-malate = maleate + H2O. The enzyme catalyses cis-aconitate + H2O = D-threo-isocitrate. Its pathway is organic acid metabolism; 2-oxosuberate biosynthesis. Component of a hydro-lyase with broad substrate specificity for cis-unsaturated tricarboxylic acids. Catalyzes both the reversible dehydration of (R)-homocitrate ((R)-2-hydroxybutane-1,2,4-tricarboxylate) to produce cis-homoaconitate ((Z)-but-1-ene-1,2,4-tricarboxylate), and its hydration to homoisocitrate ((1R,2S)-1-hydroxybutane-1,2,4-tricarboxylate). Is also able to hydrate the analogous longer chain substrates cis-homo(2)-aconitate, cis-homo(3)-aconitate, and even the non-physiological cis-homo(4)-aconitate with similar efficiency. These reactions are part of the biosynthesis pathway of coenzyme B. Can also catalyze the hydration of maleate to (R)-malate, and that of cis-aconitate. Cannot catalyze the hydration of citraconate and the dehydration of (S)-homocitrate, citramalate, 2-isopropylmalate, 3-isopropylmalate, citrate or threo-DL-isocitrate. This chain is Methanogen homoaconitase small subunit (hacB), found in Methanocaldococcus jannaschii (strain ATCC 43067 / DSM 2661 / JAL-1 / JCM 10045 / NBRC 100440) (Methanococcus jannaschii).